Reading from the N-terminus, the 522-residue chain is MKSIILFVLSLLLILEKQAAVMGQKCGSKGQLPSGSSQFPRGQKGQHYSGQKDEQHTKSKGSFSIQHTYHVDINDHDRTQKSQQYDLNAQHKMTKSKQHLGGSQELLNYKQEGRDHDKSKDHFHMIVIHHKGGQAHRGTQNPSQDQGNSPSGKGISSQYSNTEKRLWVHGLTKEQASASGAQKGRTQGGSQSSYVLQTEELVANKQQRETQNSPQNKGHYQNVVEMREEHSSKLQTSLHPAYQDRLQHGPKDIFTTQDELLVYNKNQHQTKNLNQDQEHGQKTHKISYQSSRTEERQLNRGEKSVQKDVSKGGISIQTEEKIHGKSQNQVTIHSQGQEHGHKENKMSYQSSSTEERHLNCGEKGIHKGVSKGSISIQTEEQIHGKSQNQVRIPSQAQEHGHKENKMSYQSSSTEERRLNYGGKSMQKDVSQSSTSFHTEKLVEGKSQIQTPNPNQDQWSVQNAKGKSDQSAGREQDLLSHEQKGRHQQESSEARNIVITEHEVAYDDHLTQQYNEDRNPVST.

The first 23 residues, 1–23, serve as a signal peptide directing secretion; it reads MKSIILFVLSLLLILEKQAAVMG. Disordered regions lie at residues 26–62, 132–158, 272–358, and 379–522; these read CGSK…SKGS, GGQA…ISSQ, NLNQ…ERHL, and EEQI…PVST. 2 stretches are compositionally biased toward polar residues: residues 31–40 and 137–158; these read QLPSGSSQFP and RGTQ…ISSQ. Positions 292-310 are enriched in basic and acidic residues; that stretch reads RTEERQLNRGEKSVQKDVS. Residues 325–335 are compositionally biased toward polar residues; it reads KSQNQVTIHSQ. A compositionally biased stretch (basic and acidic residues) spans 336 to 345; that stretch reads GQEHGHKENK. 3 stretches are compositionally biased toward polar residues: residues 379–397, 427–436, and 446–464; these read EEQI…SQAQ, KDVSQSSTSF, and SQIQ…QNAK. 2 stretches are compositionally biased toward basic and acidic residues: residues 465-492 and 499-522; these read GKSD…ESSE and TEHE…PVST.

It belongs to the semenogelin family. As to quaternary structure, interacts with SERPINA5.

It is found in the secreted. Its function is as follows. Participates in the formation of a gel matrix (sperm coagulum) entrapping the accessory gland secretions and ejaculated spermatozoa. This Hylobates klossii (Kloss's gibbon) protein is Semenogelin-2 (SEMG2).